Here is an 856-residue protein sequence, read N- to C-terminus: Structure-specific endonuclease subunit SLX4 (856 aa).

The segment covering 1–19 has biased composition (polar residues); sequence MDNAAIASQSNTPPSNGRS. 9 disordered regions span residues 1-24, 39-61, 88-121, 139-201, 296-326, 362-392, 621-640, 653-688, and 715-742; these read MDNA…ARFV, IEPS…SKSP, VDSP…HKMA, KTRK…TDNE, GIQT…KKPQ, KKMG…GNGP, SKSS…SQGD, RSDS…SNEG, and DSVG…QDCD. The span at 51–60 shows a compositional bias: low complexity; it reads STLLTSLSKS. Basic residues predominate over residues 139-152; it reads KTRKKKAATAKRTR. A compositionally biased stretch (polar residues) spans 296–309; it reads GIQTPTESRPATND. Residues 673-686 are compositionally biased toward polar residues; sequence SVKSQESKSFSLSN.

Belongs to the SLX4 family. As to quaternary structure, forms a heterodimer with SLX1. Post-translationally, phosphorylated in response to DNA damage.

The protein resides in the nucleus. In terms of biological role, regulatory subunit of the SLX1-SLX4 structure-specific endonuclease that resolves DNA secondary structures generated during DNA repair and recombination. Has endonuclease activity towards branched DNA substrates, introducing single-strand cuts in duplex DNA close to junctions with ss-DNA. This is Structure-specific endonuclease subunit SLX4 from Ajellomyces dermatitidis (strain ER-3 / ATCC MYA-2586) (Blastomyces dermatitidis).